The sequence spans 286 residues: Tyrosine recombinase XerA (286 aa).

The region spanning 5-82 is the Core-binding (CB) domain; that stretch reads TLRSEVLEEF…ALKAYFKFEG (78 aa). The Tyr recombinase domain occupies 98–274; that stretch reads TLPKSLTEEE…TAKHLKEAVE (177 aa). Catalysis depends on residues arginine 135, lysine 160, histidine 226, arginine 229, and histidine 252. The active-site O-(3'-phospho-DNA)-tyrosine intermediate is the tyrosine 261.

Belongs to the 'phage' integrase family. XerA subfamily.

It localises to the cytoplasm. Functionally, site-specific tyrosine recombinase, which acts by catalyzing the cutting and rejoining of the recombining DNA molecules. The polypeptide is Tyrosine recombinase XerA (Pyrococcus furiosus (strain ATCC 43587 / DSM 3638 / JCM 8422 / Vc1)).